A 148-amino-acid chain; its full sequence is Ubiquitin-conjugating enzyme E2 4 (148 aa).

Residues 1 to 22 (MSSSKRIAKELSDLERDPPTSC) are disordered. Residues 2–148 (SSSKRIAKEL…AREWTKKYAV (147 aa)) enclose the UBC core domain. The span at 7-18 (IAKELSDLERDP) shows a compositional bias: basic and acidic residues. Serine 12 is modified (phosphoserine). Cysteine 86 acts as the Glycyl thioester intermediate in catalysis. Lysine 91 participates in a covalent cross-link: Glycyl lysine isopeptide (Lys-Gly) (interchain with G-Cter in ubiquitin).

This sequence belongs to the ubiquitin-conjugating enzyme family. In terms of assembly, interacts with TUL1. In terms of processing, the N-terminus is blocked.

It catalyses the reaction S-ubiquitinyl-[E1 ubiquitin-activating enzyme]-L-cysteine + [E2 ubiquitin-conjugating enzyme]-L-cysteine = [E1 ubiquitin-activating enzyme]-L-cysteine + S-ubiquitinyl-[E2 ubiquitin-conjugating enzyme]-L-cysteine.. Its pathway is protein modification; protein ubiquitination. In terms of biological role, E2 ubiquitin-conjugating enzyme that catalyzes the covalent attachment of ubiquitin to other proteins. Mediates the selective degradation of short-lived and abnormal proteins. Mediates ubiquitination of PEX5. The chain is Ubiquitin-conjugating enzyme E2 4 from Saccharomyces cerevisiae (strain ATCC 204508 / S288c) (Baker's yeast).